Here is a 49-residue protein sequence, read N- to C-terminus: Small, acid-soluble spore protein O (49 aa).

Positions 1–49 are disordered; sequence MGKRKANHIVPGMNAASAQGQGTGYNEEFANEPLTAAQRQNNKKRKKNQ.

The protein belongs to the SspO family.

Its subcellular location is the spore core. This Bacillus cytotoxicus (strain DSM 22905 / CIP 110041 / 391-98 / NVH 391-98) protein is Small, acid-soluble spore protein O.